The chain runs to 293 residues: Undecaprenyl-diphosphatase (293 aa).

6 consecutive transmembrane segments (helical) span residues 74–94 (VLVFFAKEIWQIITGWFAGVF), 107–127 (WMIIVATIPVVILGVLGKDLI), 134–154 (MWITASVLILFSLVFILAEKM), 209–229 (FLLAIPAVLGSGLYSLPDAFA), 243–263 (VGTLVAFVVGYISIAWLMKFV), and 271–291 (FAAYRIPAGLLVMLLLALGML).

Belongs to the UppP family.

It is found in the cell membrane. The enzyme catalyses di-trans,octa-cis-undecaprenyl diphosphate + H2O = di-trans,octa-cis-undecaprenyl phosphate + phosphate + H(+). In terms of biological role, catalyzes the dephosphorylation of undecaprenyl diphosphate (UPP). Confers resistance to bacitracin. This is Undecaprenyl-diphosphatase from Corynebacterium glutamicum (strain ATCC 13032 / DSM 20300 / JCM 1318 / BCRC 11384 / CCUG 27702 / LMG 3730 / NBRC 12168 / NCIMB 10025 / NRRL B-2784 / 534).